We begin with the raw amino-acid sequence, 540 residues long: Chaperonin GroEL (540 aa).

ATP contacts are provided by residues 30–33 (TLGP), Lys51, 87–91 (DGTTT), Gly415, and Asp496.

The protein belongs to the chaperonin (HSP60) family. As to quaternary structure, forms a cylinder of 14 subunits composed of two heptameric rings stacked back-to-back. Interacts with the co-chaperonin GroES.

The protein localises to the cytoplasm. It carries out the reaction ATP + H2O + a folded polypeptide = ADP + phosphate + an unfolded polypeptide.. Together with its co-chaperonin GroES, plays an essential role in assisting protein folding. The GroEL-GroES system forms a nano-cage that allows encapsulation of the non-native substrate proteins and provides a physical environment optimized to promote and accelerate protein folding. The sequence is that of Chaperonin GroEL from Thermodesulfovibrio yellowstonii (strain ATCC 51303 / DSM 11347 / YP87).